The chain runs to 412 residues: MSELHSLLTFPVRPISEEHYLGELSRFLKAGIPATYTLEQVAAFERSELREDADEVSDEEEQSNTTPLHILARSLPGNLSDDEEQVVLHMMDMLFEYGAGWNFIDFENKTVGDLILERNGGNRESPLYQRVVEAGVSAELLLRKLNGGDVEFIDENEIDICAEASAEVVPKDALDDSTGKVSSVSDDDATAADPDTYLNTKLKYTEDALITENNKDGVMMDWETDIMKLAADTLVSRKPVGESVVLNIGFGMGIIDTFIQERNPKKHYICEAHPDVLKKMKNDGWYQKPNVVILEGKWQDSLNKLLDEGNVFFDGIYYDTFSEHYEDMLDLYDIVVGLVNPEGVFSFFNGLGADRPLCYDVYKKIVEVDVATYGMNCEYTYVDLKGKLPDWKDVKRSYYNCEYYYHPKISFA.

The RMT2 domain occupies 190–412; that stretch reads TAADPDTYLN…YYYHPKISFA (223 aa). S-adenosyl-L-methionine is bound by residues Y197, M227, 250-255, 271-273, 298-299, and D319; these read FGMGII, EAH, and WQ.

The protein belongs to the class I-like SAM-binding methyltransferase superfamily. RMT2 methyltransferase family. In terms of assembly, monomer.

Its subcellular location is the cytoplasm. The protein resides in the nucleus. Functionally, S-adenosyl-L-methionine-dependent protein-arginine N-methyltransferase that methylates the delta-nitrogen atom of arginine residues to form N5-methylarginine (type IV) in target proteins. Monomethylates ribosomal protein L12. This is Protein arginine N-methyltransferase 2 from Candida glabrata (strain ATCC 2001 / BCRC 20586 / JCM 3761 / NBRC 0622 / NRRL Y-65 / CBS 138) (Yeast).